The sequence spans 329 residues: 4-hydroxythreonine-4-phosphate dehydrogenase (329 aa).

Substrate-binding residues include His-136 and Thr-137. 3 residues coordinate a divalent metal cation: His-166, His-211, and His-266. Lys-274, Asn-283, and Arg-292 together coordinate substrate.

The protein belongs to the PdxA family. As to quaternary structure, homodimer. It depends on Zn(2+) as a cofactor. Mg(2+) is required as a cofactor. Requires Co(2+) as cofactor.

The protein resides in the cytoplasm. It catalyses the reaction 4-(phosphooxy)-L-threonine + NAD(+) = 3-amino-2-oxopropyl phosphate + CO2 + NADH. The protein operates within cofactor biosynthesis; pyridoxine 5'-phosphate biosynthesis; pyridoxine 5'-phosphate from D-erythrose 4-phosphate: step 4/5. Catalyzes the NAD(P)-dependent oxidation of 4-(phosphooxy)-L-threonine (HTP) into 2-amino-3-oxo-4-(phosphooxy)butyric acid which spontaneously decarboxylates to form 3-amino-2-oxopropyl phosphate (AHAP). In Escherichia coli (strain SE11), this protein is 4-hydroxythreonine-4-phosphate dehydrogenase.